The chain runs to 190 residues: Myophilin (190 aa).

Positions 1-23 (MSNVPPPSGLSYQVKKKLEGKRD) are disordered. The region spanning 24-130 (KDQENEALEW…RTLFALGRTC (107 aa)) is the Calponin-homology (CH) domain. Residues 165–189 (VSLQYGSNKGASQAGINMGKQRMIM) form a Calponin-like repeat.

The protein belongs to the calponin family. As to expression, muscle specific.

This is Myophilin from Echinococcus granulosus (Hydatid tapeworm).